We begin with the raw amino-acid sequence, 100 residues long: Defensin-like protein 316 (100 aa).

Residues 1–18 form the signal peptide; that stretch reads MASHIICYIFCIIKLSCA. Disulfide bonds link C21–C84, C43–C64, and C53–C76.

Belongs to the DEFL family.

It is found in the secreted. This is Defensin-like protein 316 from Arabidopsis thaliana (Mouse-ear cress).